The primary structure comprises 123 residues: MESSLCKKSLMKRRRALRVRKVLKGSPTKPRLSVVKTNKHIYVQLIDDSIGKTLASVSTLSKLNKSQGLTKKNQEVAKVLGTQIAELGKNLQLDRVVFDRGPFKYHGIVSMVADGAREGGLQF.

This sequence belongs to the universal ribosomal protein uL18 family. In terms of assembly, part of the 50S ribosomal subunit; part of the 5S rRNA/L5/L18/L25 subcomplex. Contacts the 5S and 23S rRNAs.

This is one of the proteins that bind and probably mediate the attachment of the 5S RNA into the large ribosomal subunit, where it forms part of the central protuberance. This chain is Large ribosomal subunit protein uL18, found in Chlamydia pneumoniae (Chlamydophila pneumoniae).